The following is a 782-amino-acid chain: E3 ubiquitin-protein ligase SopA (782 aa).

Residue cysteine 753 is the Glycyl thioester intermediate of the active site.

This sequence belongs to the SopA E3 ligase family. In terms of processing, ubiquitinated in the presence of host E1 ubiquitin-activating enzyme, E2 ubiquitin-conjugating enzyme and ubiquitin.

The protein resides in the secreted. The protein localises to the host cell. It carries out the reaction S-ubiquitinyl-[E2 ubiquitin-conjugating enzyme]-L-cysteine + [acceptor protein]-L-lysine = [E2 ubiquitin-conjugating enzyme]-L-cysteine + N(6)-ubiquitinyl-[acceptor protein]-L-lysine.. Functionally, effector proteins function to alter host cell physiology and promote bacterial survival in host tissues. This protein is an E3 ubiquitin ligase that interferes with host's ubiquitination pathway. This is E3 ubiquitin-protein ligase SopA (sopA) from Salmonella choleraesuis (strain SC-B67).